A 198-amino-acid polypeptide reads, in one-letter code: tRNA (pseudouridine(54)-N(1))-methyltransferase (198 aa).

Position 128 (Leu128) interacts with S-adenosyl-L-methionine.

This sequence belongs to the methyltransferase superfamily. TrmY family. As to quaternary structure, homodimer.

It localises to the cytoplasm. It carries out the reaction pseudouridine(54) in tRNA + S-adenosyl-L-methionine = N(1)-methylpseudouridine(54) in tRNA + S-adenosyl-L-homocysteine + H(+). Specifically catalyzes the N1-methylation of pseudouridine at position 54 (Psi54) in tRNAs. In Haloarcula marismortui (strain ATCC 43049 / DSM 3752 / JCM 8966 / VKM B-1809) (Halobacterium marismortui), this protein is tRNA (pseudouridine(54)-N(1))-methyltransferase.